Here is an 806-residue protein sequence, read N- to C-terminus: Polyribonucleotide nucleotidyltransferase (806 aa).

Mg(2+) is bound by residues Asp488 and Asp494. One can recognise a KH domain in the interval 555-614; it reads PQIRTVQIPTDKIRDLIGPGGKTIRGIIEATQVKIDVDDTGRVNIASSDEEGLKKALAMI. The S1 motif domain maps to 624–691; it reads GKTYLGKVVR…EGNRIKLSRK (68 aa). A disordered region spans residues 698-806; sequence RQKLGLPEPG…QGGGGNRGPQ (109 aa). A compositionally biased stretch (low complexity) spans 704-717; the sequence is PEPGAEAPAAAEGQ. Positions 738–757 are enriched in acidic residues; sequence GGEDFDDFDEEGGEGEGEDE. Positions 758–774 are enriched in basic and acidic residues; that stretch reads NFNREDTPNSAPGERRP. Positions 783-792 are enriched in basic residues; the sequence is RGRRRRRGRG. The segment covering 793–806 has biased composition (gly residues); the sequence is RGPGQGGGGNRGPQ.

This sequence belongs to the polyribonucleotide nucleotidyltransferase family. Requires Mg(2+) as cofactor.

The protein localises to the cytoplasm. The catalysed reaction is RNA(n+1) + phosphate = RNA(n) + a ribonucleoside 5'-diphosphate. In terms of biological role, involved in mRNA degradation. Catalyzes the phosphorolysis of single-stranded polyribonucleotides processively in the 3'- to 5'-direction. The sequence is that of Polyribonucleotide nucleotidyltransferase from Acidobacterium capsulatum (strain ATCC 51196 / DSM 11244 / BCRC 80197 / JCM 7670 / NBRC 15755 / NCIMB 13165 / 161).